Consider the following 201-residue polypeptide: MAPDLSELAAAAAARGAYLAGVGVAVLLAASFLPVAESSCVRDNSLVRDISQMPQSSYGIEGLSHITVAGALNHGMKEVEVWLQTISPGQRTPIHRHSCEEVFTVLKGKGTLLMGSSSLKYPGQPQEIPFFQNTTFSIPVNDPHQVWNSDEHEDLQVLVIISRPPAKIFLYDDWSMPHTAAVLKFPFVWDEDCFEAAKDEL.

The first 38 residues, 1–38 (MAPDLSELAAAAAARGAYLAGVGVAVLLAASFLPVAES), serve as a signal peptide directing secretion. An intrachain disulfide couples Cys-40 to Cys-193. Positions 95, 97, and 101 each coordinate Zn(2+). Asn-133 is a glycosylation site (N-linked (GlcNAc...) asparagine). His-144 is a binding site for Zn(2+). Positions 198–201 (KDEL) match the Prevents secretion from ER motif.

As to quaternary structure, homodimer. In terms of processing, glycosylated. In terms of tissue distribution, expressed in roots, coleoptiles, leaves, stems, tassels and ears.

Its subcellular location is the endoplasmic reticulum lumen. Its function is as follows. Receptor for the plant hormone auxin. This Zea mays (Maize) protein is Auxin-binding protein 1.